The following is a 487-amino-acid chain: Glycogen synthase (487 aa).

ADP-alpha-D-glucose is bound at residue Lys23.

It belongs to the glycosyltransferase 1 family. Bacterial/plant glycogen synthase subfamily.

It catalyses the reaction [(1-&gt;4)-alpha-D-glucosyl](n) + ADP-alpha-D-glucose = [(1-&gt;4)-alpha-D-glucosyl](n+1) + ADP + H(+). It functions in the pathway glycan biosynthesis; glycogen biosynthesis. Functionally, synthesizes alpha-1,4-glucan chains using ADP-glucose. The polypeptide is Glycogen synthase (Pseudomonas fluorescens (strain Pf0-1)).